We begin with the raw amino-acid sequence, 530 residues long: UDP-glucuronosyltransferase 2A3 (530 aa).

The signal sequence occupies residues 1-23 (MAPGKLASAVLLLLLCCAGSGFC). Topologically, residues 24–494 (GKVLVWPCEM…SWFQYHSLDV (471 aa)) are extracellular. A glycan (N-linked (GlcNAc...) asparagine) is linked at N316. A helical transmembrane segment spans residues 495–515 (IGFLLACVASAILLVTKCCLF). Topologically, residues 516–530 (SFQNFIKIGKRIKKE) are cytoplasmic.

This sequence belongs to the UDP-glycosyltransferase family. In terms of tissue distribution, specifically expressed in liver and small intestine.

It localises to the membrane. The catalysed reaction is glucuronate acceptor + UDP-alpha-D-glucuronate = acceptor beta-D-glucuronoside + UDP + H(+). Functionally, UDP-glucuronosyltransferases catalyze phase II biotransformation reactions in which lipophilic substrates are conjugated with glucuronic acid to increase water solubility and enhance excretion. They are of major importance in the conjugation and subsequent elimination of potentially toxic xenobiotics and endogenous compounds. The chain is UDP-glucuronosyltransferase 2A3 (UGT2A3) from Cavia porcellus (Guinea pig).